The primary structure comprises 76 residues: Small ribosomal subunit protein bS16 (76 aa).

The protein belongs to the bacterial ribosomal protein bS16 family.

The protein is Small ribosomal subunit protein bS16 of Helicobacter pylori (strain HPAG1).